Here is a 335-residue protein sequence, read N- to C-terminus: Nucleoid-associated protein KPN78578_25800 (335 aa).

Belongs to the YejK family.

Its subcellular location is the cytoplasm. The protein resides in the nucleoid. This Klebsiella pneumoniae subsp. pneumoniae (strain ATCC 700721 / MGH 78578) protein is Nucleoid-associated protein KPN78578_25800.